A 261-amino-acid polypeptide reads, in one-letter code: Small ribosomal subunit protein eS4 (261 aa).

In terms of domain architecture, S4 RNA-binding spans L42–D100.

The protein belongs to the eukaryotic ribosomal protein eS4 family.

The protein resides in the cytoplasm. In Prunus armeniaca (Apricot), this protein is Small ribosomal subunit protein eS4 (RPS4).